The following is a 155-amino-acid chain: Deoxyuridine 5'-triphosphate nucleotidohydrolase (155 aa).

Substrate contacts are provided by residues 72–74 (RSG), asparagine 85, 89–91 (TVD), and lysine 99.

This sequence belongs to the dUTPase family. It depends on Mg(2+) as a cofactor.

It carries out the reaction dUTP + H2O = dUMP + diphosphate + H(+). The protein operates within pyrimidine metabolism; dUMP biosynthesis; dUMP from dCTP (dUTP route): step 2/2. This enzyme is involved in nucleotide metabolism: it produces dUMP, the immediate precursor of thymidine nucleotides and it decreases the intracellular concentration of dUTP so that uracil cannot be incorporated into DNA. This Parvibaculum lavamentivorans (strain DS-1 / DSM 13023 / NCIMB 13966) protein is Deoxyuridine 5'-triphosphate nucleotidohydrolase.